Reading from the N-terminus, the 343-residue chain is Ribosomal RNA small subunit methyltransferase C (343 aa).

This sequence belongs to the methyltransferase superfamily. RsmC family. As to quaternary structure, monomer.

It is found in the cytoplasm. The enzyme catalyses guanosine(1207) in 16S rRNA + S-adenosyl-L-methionine = N(2)-methylguanosine(1207) in 16S rRNA + S-adenosyl-L-homocysteine + H(+). In terms of biological role, specifically methylates the guanine in position 1207 of 16S rRNA in the 30S particle. In Escherichia coli O1:K1 / APEC, this protein is Ribosomal RNA small subunit methyltransferase C.